The primary structure comprises 349 residues: Green-sensitive opsin-4 (349 aa).

At 1 to 36 (MNGTEGNNFYIPLSNRTGLARSPYEYPQYYLAEPWQ) the chain is on the extracellular side. N-linked (GlcNAc...) asparagine glycans are attached at residues N2 and N15. A helical transmembrane segment spans residues 37 to 61 (FKLLAVYMFFLICLGFPINGLTLLV). The Cytoplasmic segment spans residues 62–73 (TAQHKKLRQPLN). Residues 74-99 (FILVNLAVAGTIMVCFGFTVTFYTAI) traverse the membrane as a helical segment. Over 100–113 (NGYFVLGPTGCAIE) the chain is Extracellular. C110 and C187 are disulfide-bonded. A helical transmembrane segment spans residues 114-133 (GFMATLGGEVALWSLVVLAV). Over 134–152 (ERYIVVCKPMGSFKFSASH) the chain is Cytoplasmic. Residues 153-176 (AFAGCAFTWVMAMACAAPPLVGWS) traverse the membrane as a helical segment. Over 177–202 (RYIPEGMQCSCGPDYYTLNPEYNNES) the chain is Extracellular. N200 carries N-linked (GlcNAc...) asparagine glycosylation. Residues 203–230 (YVLYMFICHFILPVTIIFFTYGRLVCTV) form a helical membrane-spanning segment. At 231–252 (KAAAAQQQESESTQKAEREVTR) the chain is on the cytoplasmic side. A helical membrane pass occupies residues 253 to 276 (MVILMVLGFLIAWTPYATVAAWIF). The Extracellular portion of the chain corresponds to 277 to 284 (FNKGAAFS). A helical membrane pass occupies residues 285–309 (AQFMAVPAFFSKTSALYNPVIYVLL). N6-(retinylidene)lysine is present on K296. The Cytoplasmic segment spans residues 310 to 349 (NKQFRNCMLTTLFCGKNPLGDDESSTVSTSKTEVSSVSPA). The interval 329 to 349 (GDDESSTVSTSKTEVSSVSPA) is disordered. Low complexity predominate over residues 334 to 349 (STVSTSKTEVSSVSPA).

Belongs to the G-protein coupled receptor 1 family. Opsin subfamily. Post-translationally, phosphorylated on some or all of the serine and threonine residues present in the C-terminal region. Retinal double cone accessory photoreceptor cell outer segments.

It localises to the membrane. In terms of biological role, visual pigments are the light-absorbing molecules that mediate vision. They consist of an apoprotein, opsin, covalently linked to cis-retinal. This Danio rerio (Zebrafish) protein is Green-sensitive opsin-4 (opn1mw4).